The chain runs to 115 residues: Large ribosomal subunit protein uL18 (115 aa).

This sequence belongs to the universal ribosomal protein uL18 family. In terms of assembly, part of the 50S ribosomal subunit; part of the 5S rRNA/L5/L18/L25 subcomplex. Contacts the 5S and 23S rRNAs.

Its function is as follows. This is one of the proteins that bind and probably mediate the attachment of the 5S RNA into the large ribosomal subunit, where it forms part of the central protuberance. The sequence is that of Large ribosomal subunit protein uL18 from Baumannia cicadellinicola subsp. Homalodisca coagulata.